Here is a 480-residue protein sequence, read N- to C-terminus: Siroheme synthase (480 aa).

The segment at Met1 to Leu203 is precorrin-2 dehydrogenase /sirohydrochlorin ferrochelatase. Residues Ser22–Val23 and Asn43–Gln44 contribute to the NAD(+) site. The residue at position 128 (Ser128) is a Phosphoserine. Residues Gly214–Ala480 form a uroporphyrinogen-III C-methyltransferase region. Residue Pro223 coordinates S-adenosyl-L-methionine. Asp246 (proton acceptor) is an active-site residue. Residue Lys268 is the Proton donor of the active site. Residues Gly299 to Asp301, Val304, Thr329 to Ala330, Met381, and Gly410 contribute to the S-adenosyl-L-methionine site.

The protein in the N-terminal section; belongs to the precorrin-2 dehydrogenase / sirohydrochlorin ferrochelatase family. This sequence in the C-terminal section; belongs to the precorrin methyltransferase family.

It carries out the reaction uroporphyrinogen III + 2 S-adenosyl-L-methionine = precorrin-2 + 2 S-adenosyl-L-homocysteine + H(+). The catalysed reaction is precorrin-2 + NAD(+) = sirohydrochlorin + NADH + 2 H(+). The enzyme catalyses siroheme + 2 H(+) = sirohydrochlorin + Fe(2+). Its pathway is cofactor biosynthesis; adenosylcobalamin biosynthesis; precorrin-2 from uroporphyrinogen III: step 1/1. It functions in the pathway cofactor biosynthesis; adenosylcobalamin biosynthesis; sirohydrochlorin from precorrin-2: step 1/1. The protein operates within porphyrin-containing compound metabolism; siroheme biosynthesis; precorrin-2 from uroporphyrinogen III: step 1/1. It participates in porphyrin-containing compound metabolism; siroheme biosynthesis; siroheme from sirohydrochlorin: step 1/1. Its pathway is porphyrin-containing compound metabolism; siroheme biosynthesis; sirohydrochlorin from precorrin-2: step 1/1. Its function is as follows. Multifunctional enzyme that catalyzes the SAM-dependent methylations of uroporphyrinogen III at position C-2 and C-7 to form precorrin-2 via precorrin-1. Then it catalyzes the NAD-dependent ring dehydrogenation of precorrin-2 to yield sirohydrochlorin. Finally, it catalyzes the ferrochelation of sirohydrochlorin to yield siroheme. This Neisseria meningitidis serogroup C (strain 053442) protein is Siroheme synthase.